We begin with the raw amino-acid sequence, 649 residues long: Macrolide export ATP-binding/permease protein MacB 1 (649 aa).

Positions 5–243 (LELEGIRRSY…AAAELMSLTP (239 aa)) constitute an ABC transporter domain. 41-48 (GASGSGKS) is a binding site for ATP. Helical transmembrane passes span 274-294 (ALTMLGIIIGIASVVSILVVG), 420-440 (VVGQVILVGNMPATVVGVVAE), 524-544 (LFLTLVAVISLVVGGIGVMNI), 578-598 (VLVCLIGGALGISLSFAIGLI), and 608-628 (IAFPPMALFSAFLCSTVIGVV).

Belongs to the ABC transporter superfamily. Macrolide exporter (TC 3.A.1.122) family. In terms of assembly, homodimer. Part of the tripartite efflux system MacAB-TolC, which is composed of an inner membrane transporter, MacB, a periplasmic membrane fusion protein, MacA, and an outer membrane component, TolC. The complex forms a large protein conduit and can translocate molecules across both the inner and outer membranes. Interacts with MacA.

It localises to the cell inner membrane. Part of the tripartite efflux system MacAB-TolC. MacB is a non-canonical ABC transporter that contains transmembrane domains (TMD), which form a pore in the inner membrane, and an ATP-binding domain (NBD), which is responsible for energy generation. Confers resistance against macrolides. This chain is Macrolide export ATP-binding/permease protein MacB 1, found in Yersinia pestis bv. Antiqua (strain Antiqua).